Consider the following 520-residue polypeptide: GMP synthase [glutamine-hydrolyzing] (520 aa).

Positions 12–205 (KIIVLDYGSQ…AISICGGRGD (194 aa)) constitute a Glutamine amidotransferase type-1 domain. C89 serves as the catalytic Nucleophile. Active-site residues include H179 and E181. The GMPS ATP-PPase domain maps to 206–395 (WSMDNFIDMQ…LGMPDEVVWR (190 aa)). 233 to 239 (SGGVDSS) lines the ATP pocket.

As to quaternary structure, homodimer.

The catalysed reaction is XMP + L-glutamine + ATP + H2O = GMP + L-glutamate + AMP + diphosphate + 2 H(+). The protein operates within purine metabolism; GMP biosynthesis; GMP from XMP (L-Gln route): step 1/1. Catalyzes the synthesis of GMP from XMP. This is GMP synthase [glutamine-hydrolyzing] from Streptococcus equi subsp. equi (strain 4047).